Consider the following 1097-residue polypeptide: Protease Do-like 7 (1097 aa).

The tract at residues 55–243 (VLRTTACRAF…LPLQRVVRAL (189 aa)) is serine protease. The 98-residue stretch at 269–366 (MTFLHKGFDE…RGGQPLSVSV (98 aa)) folds into the PDZ domain. The active-site Charge relay system is the H524. The span at 546–556 (TSSGDGSQNDF) shows a compositional bias: polar residues. Residues 546-577 (TSSGDGSQNDFGSEAKKQRVDEDSSDGIAANG) are disordered. Basic and acidic residues predominate over residues 558–567 (SEAKKQRVDE). The Charge relay system role is filled by S785.

This sequence belongs to the peptidase S1C family.

It localises to the cytoplasm. Its function is as follows. Probable serine protease. This Arabidopsis thaliana (Mouse-ear cress) protein is Protease Do-like 7 (DEGP7).